The primary structure comprises 297 residues: Large ribosomal subunit protein uL18 (297 aa).

Lysine 164 participates in a covalent cross-link: Glycyl lysine isopeptide (Lys-Gly) (interchain with G-Cter in ubiquitin). A phosphoserine mark is found at serine 167, serine 176, and serine 235.

This sequence belongs to the universal ribosomal protein uL18 family. As to quaternary structure, component of the large ribosomal subunit (LSU). Mature yeast ribosomes consist of a small (40S) and a large (60S) subunit. The 40S small subunit contains 1 molecule of ribosomal RNA (18S rRNA) and 33 different proteins (encoded by 57 genes). The large 60S subunit contains 3 rRNA molecules (25S, 5.8S and 5S rRNA) and 46 different proteins (encoded by 81 genes). Component of a hexameric 5S RNP precursor complex, composed of 5S RNA, RRS1, RPF2, RPL5, RPL11A/RPL11B and SYO1; this complex acts as a precursor for ribosome assembly. RPL5/uL18 forms a heterotrimeric complex with SYO1 and RPL11A/RPL11B/uL5. Interaction of this complex with KAP104 allows the nuclear import of the heterotrimer.

It localises to the cytoplasm. Its subcellular location is the nucleus. Its function is as follows. Component of the ribosome, a large ribonucleoprotein complex responsible for the synthesis of proteins in the cell. The small ribosomal subunit (SSU) binds messenger RNAs (mRNAs) and translates the encoded message by selecting cognate aminoacyl-transfer RNA (tRNA) molecules. The large subunit (LSU) contains the ribosomal catalytic site termed the peptidyl transferase center (PTC), which catalyzes the formation of peptide bonds, thereby polymerizing the amino acids delivered by tRNAs into a polypeptide chain. The nascent polypeptides leave the ribosome through a tunnel in the LSU and interact with protein factors that function in enzymatic processing, targeting, and the membrane insertion of nascent chains at the exit of the ribosomal tunnel. The polypeptide is Large ribosomal subunit protein uL18 (Saccharomyces cerevisiae (strain ATCC 204508 / S288c) (Baker's yeast)).